A 111-amino-acid polypeptide reads, in one-letter code: UPF0060 membrane protein Aave_2845 (111 aa).

Transmembrane regions (helical) follow at residues 7 to 27 (FLLYAVTALAEIAGCYLPWLW), 33 to 53 (SAWLLVPGAACLALFAWLLTL), 63 to 83 (AAYGGVYVAVALGWLWAVDGI), and 90 to 110 (LAGAAVTLAGMAIIAFAPRGA).

This sequence belongs to the UPF0060 family.

It localises to the cell inner membrane. This chain is UPF0060 membrane protein Aave_2845, found in Paracidovorax citrulli (strain AAC00-1) (Acidovorax citrulli).